The chain runs to 701 residues: Glycine--tRNA ligase beta subunit (701 aa).

It belongs to the class-II aminoacyl-tRNA synthetase family. In terms of assembly, tetramer of two alpha and two beta subunits.

Its subcellular location is the cytoplasm. The catalysed reaction is tRNA(Gly) + glycine + ATP = glycyl-tRNA(Gly) + AMP + diphosphate. The sequence is that of Glycine--tRNA ligase beta subunit from Bradyrhizobium sp. (strain BTAi1 / ATCC BAA-1182).